The primary structure comprises 273 residues: Fos-related antigen 1 (273 aa).

Disordered regions lie at residues 1-46 (MYRD…IDSS) and 60-114 (GPTG…RRER). A compositionally biased stretch (low complexity) spans 7–35 (EPGPSSGAGSPYGRPAQPPQAQAQTAQQQ). The bZIP domain maps to 105-168 (EERRRVRRER…ERLELVLEAH (64 aa)). A basic motif region spans residues 107–127 (RRRVRRERNKLAAAKCRNRRK). Positions 133–161 (LQAETDKLEDEKSGLQREIEELQKQKERL) are leucine-zipper. Basic and acidic residues predominate over residues 169-182 (RPICKIPEGDKKDP). Positions 169 to 273 (RPICKIPEGD…PLGSPTLLAL (105 aa)) are disordered. Composition is skewed to low complexity over residues 217-235 (LHTPTLMTTPSLTPFTPSL) and 254-273 (SSSSGDPSSDPLGSPTLLAL). A Phosphoserine modification is found at Ser-267.

Belongs to the bZIP family. Fos subfamily. Heterodimer. Interacts with the BAF multiprotein chromatin-remodeling complex subunits SMARCB1 and SMARCD1. Interacts with ARID1A and JUN.

The protein localises to the nucleus. In Mus musculus (Mouse), this protein is Fos-related antigen 1 (Fosl1).